The chain runs to 631 residues: 1-deoxy-D-xylulose-5-phosphate synthase (631 aa).

Thiamine diphosphate is bound by residues histidine 87 and 128–130 (GHS). Aspartate 159 provides a ligand contact to Mg(2+). Thiamine diphosphate contacts are provided by residues 160 to 161 (GA), asparagine 188, phenylalanine 295, and glutamate 377. Residue asparagine 188 participates in Mg(2+) binding.

This sequence belongs to the transketolase family. DXPS subfamily. As to quaternary structure, homodimer. Requires Mg(2+) as cofactor. The cofactor is thiamine diphosphate.

It catalyses the reaction D-glyceraldehyde 3-phosphate + pyruvate + H(+) = 1-deoxy-D-xylulose 5-phosphate + CO2. It participates in metabolic intermediate biosynthesis; 1-deoxy-D-xylulose 5-phosphate biosynthesis; 1-deoxy-D-xylulose 5-phosphate from D-glyceraldehyde 3-phosphate and pyruvate: step 1/1. Catalyzes the acyloin condensation reaction between C atoms 2 and 3 of pyruvate and glyceraldehyde 3-phosphate to yield 1-deoxy-D-xylulose-5-phosphate (DXP). The sequence is that of 1-deoxy-D-xylulose-5-phosphate synthase from Pseudomonas putida (strain W619).